Reading from the N-terminus, the 78-residue chain is Defensin-like protein (78 aa).

The N-terminal stretch at 1-31 (MGRSIRLFATFFLIAMLFLSTEMGPMTSAEA) is a signal peptide. Disulfide bonds link Cys34-Cys78, Cys45-Cys65, Cys51-Cys72, and Cys55-Cys74.

It belongs to the DEFL family. As to expression, predominantly expressed in the pistil during all stages of flower development.

It localises to the secreted. Functionally, may be involved in the defense of the pistil against pathogen infection. The polypeptide is Defensin-like protein (Petunia integrifolia (Violet-flowered petunia)).